Here is a 179-residue protein sequence, read N- to C-terminus: RNA polymerase sigma-E factor (179 aa).

Residues 36–49 (DLLQTALVRTYGRW) carry the Polymerase core binding motif. Positions 130–149 (TEETAAALGMSAGTVKSTLH) form a DNA-binding region, H-T-H motif.

Belongs to the sigma-70 factor family. ECF subfamily.

The protein resides in the cytoplasm. Its function is as follows. Sigma factors are initiation factors that promote the attachment of RNA polymerase to specific initiation sites and are then released. This sigma factor is required for normal cell wall integrity; it is recruited by RNA polymerase to transcribe genes with cell wall-related functions. In Streptomyces avermitilis (strain ATCC 31267 / DSM 46492 / JCM 5070 / NBRC 14893 / NCIMB 12804 / NRRL 8165 / MA-4680), this protein is RNA polymerase sigma-E factor (sigE).